Here is a 413-residue protein sequence, read N- to C-terminus: Putative competence-damage inducible protein (413 aa).

The protein belongs to the CinA family.

In Pediococcus pentosaceus (strain ATCC 25745 / CCUG 21536 / LMG 10740 / 183-1w), this protein is Putative competence-damage inducible protein.